The following is a 680-amino-acid chain: PAN2-PAN3 deadenylation complex subunit PAN3 (680 aa).

Disordered regions lie at residues Met1–Thr26, His51–Thr87, and Phe99–Pro120. The segment at Asp25 to Thr54 adopts a C3H1-type zinc-finger fold. Over residues Asp52–Thr64 the composition is skewed to basic and acidic residues. The PABPC-interacting motif-2 (PAM-2) signature appears at Ala62–Gln82. Low complexity predominate over residues Phe99–Thr117. Residues Gln256–Asn522 are pseudokinase domain. ATP is bound by residues Arg311, Glu360–Thr367, and Thr422–Lys423. Positions Glu523–Thr561 form a coiled coil. The segment at Ile562–Phe680 is knob domain. The span at Ser655–His669 shows a compositional bias: gly residues. Residues Ser655–Phe680 are disordered. The span at Gly670 to Phe680 shows a compositional bias: basic residues.

This sequence belongs to the protein kinase superfamily. PAN3 family. In terms of assembly, homodimer. Forms a heterotrimer with a catalytic subunit PAN2 to form the poly(A)-nuclease (PAN) deadenylation complex. Interacts (via PAM-2 motif) with poly(A)-binding protein PAB1 (via PABC domain), conferring substrate specificity of the enzyme complex.

The protein resides in the cytoplasm. Functionally, regulatory subunit of the poly(A)-nuclease (PAN) deadenylation complex, one of two cytoplasmic mRNA deadenylases involved in mRNA turnover. PAN specifically shortens poly(A) tails of RNA and the activity is stimulated by poly(A)-binding protein PAB1. PAN deadenylation is followed by rapid degradation of the shortened mRNA tails by the CCR4-NOT complex. Deadenylated mRNAs are then degraded by two alternative mechanisms, namely exosome-mediated 3'-5' exonucleolytic degradation, or deadenylation-dependent mRNA decaping and subsequent 5'-3' exonucleolytic degradation by XRN1. May also be involved in post-transcriptional maturation of mRNA poly(A) tails. PAN3 acts as a positive regulator for PAN activity, recruiting the catalytic subunit PAN2 to mRNA via its interaction with RNA and with PAB1. This is PAN2-PAN3 deadenylation complex subunit PAN3 from Pyricularia oryzae (strain 70-15 / ATCC MYA-4617 / FGSC 8958) (Rice blast fungus).